Reading from the N-terminus, the 470-residue chain is 5-hydroxytryptamine receptor 2A (470 aa).

Positions 1 to 23 (MDVLFEDNAPLSPTTSSLMPSNG) are disordered. Residues 1–80 (MDVLFEDNAP…LQEKNWSALL (80 aa)) lie on the Extracellular side of the membrane. The span at 10–21 (PLSPTTSSLMPS) shows a compositional bias: low complexity. 4 N-linked (GlcNAc...) asparagine glycosylation sites follow: Asn-38, Asn-44, Asn-51, and Asn-54. Residues 81-97 (TAVVIILTIAGNILVIM) form a helical membrane-spanning segment. The Cytoplasmic segment spans residues 98 to 111 (AVSLEKKLQNATNY). Residues 112–137 (FLMSLAIADMLLGFLVMPVSMLTILY) form a helical membrane-spanning segment. The Extracellular portion of the chain corresponds to 138 to 146 (GYRWPLPSK). The helical transmembrane segment at 147–171 (LCAVWIYLDVLFSTASIMHLCAISL) threads the bilayer. Cys-148 and Cys-227 form a disulfide bridge. Asp-155 provides a ligand contact to serotonin. A DRY motif; important for ligand-induced conformation changes motif is present at residues 172 to 174 (DRY). The Cytoplasmic portion of the chain corresponds to 172–191 (DRYVAIQNPIHHSRFNSRTK). A helical membrane pass occupies residues 192 to 215 (AFLKIIAVWTISVGISMPIPVFGL). Over 216–232 (QDDSKVFKEGSCLLADD) the chain is Extracellular. Residues 233–258 (NFVLIGSFVSFFIPLTIMVITYFLTI) form a helical membrane-spanning segment. At 259–321 (KSLQKEATLC…QSISNEQKAC (63 aa)) the chain is on the cytoplasmic side. Ser-280 is subject to Phosphoserine. The helical transmembrane segment at 322–347 (KVLGIVFFLFVVMWCPFFITNIMAVI) threads the bilayer. Asn-342 provides a ligand contact to serotonin. Cysteines 348 and 352 form a disulfide. The Extracellular portion of the chain corresponds to 348–355 (CKESCNED). A helical transmembrane segment spans residues 356–381 (IIGALLNVFVWIGYLSSAVNPLVYTL). The NPxxY motif; important for ligand-induced conformation changes and signaling motif lies at 375–379 (NPLVY). Residues 382–470 (FNKTYRSAFS…NTVNEKVSCV (89 aa)) lie on the Cytoplasmic side of the membrane. Residues 468–470 (SCV) carry the PDZ-binding motif.

Belongs to the G-protein coupled receptor 1 family. In terms of assembly, interacts (via C-terminus) with MPDZ and PATJ. May interact (via C-terminus) with MPP3, PRDX6, DLG4, DLG1, CASK, APBA1 and MAGI2. Interacts with GRM2 and DRD2; this may affect signaling. Ubiquitous.

The protein resides in the cell membrane. The protein localises to the cell projection. It is found in the dendrite. Its subcellular location is the axon. It localises to the cytoplasmic vesicle. The protein resides in the membrane. The protein localises to the caveola. It is found in the presynapse. With respect to regulation, G-protein coupled receptor activity is regulated by lipids: oleamide increases HTR2A-mediated activity. G-protein coupled receptor for 5-hydroxytryptamine (serotonin). Also functions as a receptor for various drugs and psychoactive substances, including mescaline, psilocybin, 1-(2,5-dimethoxy-4-iodophenyl)-2-aminopropane (DOI) and lysergic acid diethylamide (LSD). Ligand binding causes a conformation change that triggers signaling via guanine nucleotide-binding proteins (G proteins) and modulates the activity of downstream effectors. HTR2A is coupled to G(q)/G(11) G alpha proteins and activates phospholipase C-beta, releasing diacylglycerol (DAG) and inositol 1,4,5-trisphosphate (IP3) second messengers that modulate the activity of phosphatidylinositol 3-kinase and promote the release of Ca(2+) ions from intracellular stores, respectively. Beta-arrestin family members inhibit signaling via G proteins and mediate activation of alternative signaling pathways. Affects neural activity, perception, cognition and mood. Plays a role in the regulation of behavior, including responses to anxiogenic situations and psychoactive substances. Plays a role in intestinal smooth muscle contraction, and may play a role in arterial vasoconstriction. The sequence is that of 5-hydroxytryptamine receptor 2A (HTR2A) from Canis lupus familiaris (Dog).